The following is a 416-amino-acid chain: Probable mannose-6-phosphate isomerase (416 aa).

Zn(2+) is bound by residues Gln99, His101, Glu126, and His259. Arg278 is an active-site residue.

It belongs to the mannose-6-phosphate isomerase type 1 family. It depends on Zn(2+) as a cofactor.

It localises to the cytoplasm. The catalysed reaction is D-mannose 6-phosphate = D-fructose 6-phosphate. It participates in nucleotide-sugar biosynthesis; GDP-alpha-D-mannose biosynthesis; alpha-D-mannose 1-phosphate from D-fructose 6-phosphate: step 1/2. Functionally, involved in the synthesis of the GDP-mannose and dolichol-phosphate-mannose required for a number of critical mannosyl transfer reactions. The protein is Probable mannose-6-phosphate isomerase of Caenorhabditis elegans.